Here is a 733-residue protein sequence, read N- to C-terminus: Polyribonucleotide nucleotidyltransferase (733 aa).

Positions 488 and 494 each coordinate Mg(2+). The region spanning 555-614 (PRIEMMTIPVEKIREVIGSGGKVIREIVEQTGAKINIEDDGTIKIASPDTKSIETAKSWI) is the KH domain. The S1 motif domain occupies 624 to 692 (GTIYQGTVVK…ERGKIRLSMK (69 aa)). Positions 698–733 (TGKEIPQDDLIKTEKEQNPDEKNKSEKKRHNRKKED) are disordered. A compositionally biased stretch (basic and acidic residues) spans 702 to 721 (IPQDDLIKTEKEQNPDEKNK). Positions 722-733 (SEKKRHNRKKED) are enriched in basic residues.

It belongs to the polyribonucleotide nucleotidyltransferase family. It depends on Mg(2+) as a cofactor.

It is found in the cytoplasm. The enzyme catalyses RNA(n+1) + phosphate = RNA(n) + a ribonucleoside 5'-diphosphate. Involved in mRNA degradation. Catalyzes the phosphorolysis of single-stranded polyribonucleotides processively in the 3'- to 5'-direction. The sequence is that of Polyribonucleotide nucleotidyltransferase from Bartonella bacilliformis (strain ATCC 35685 / KC583 / Herrer 020/F12,63).